The chain runs to 199 residues: MLKTIKSWILGKRNQEINQLISPRPSTSLNSYSAPTPKKTYRKTTQSTQEPSNSAPPSVNQKSNQQKQVKKLVDQLTKIDSLGHHTNVQQKQKIEILIRKLYREDLGEEAAQIVELRLWSLEESLEASQILKMEPKTRRILISMKLERWIRTLLRGKCDNLQMFQARYQEVMSYLQQNKVETVIMEEAWNLSVHLIQDQ.

Polar residues-rich tracts occupy residues 19–34 (QLIS…SYSA) and 43–57 (KTTQ…SAPP). The tract at residues 19–67 (QLISPRPSTSLNSYSAPTPKKTYRKTTQSTQEPSNSAPPSVNQKSNQQK) is disordered. The segment covering 58-67 (SVNQKSNQQK) has biased composition (low complexity).

Belongs to the respirovirus protein C family.

This Human parainfluenza 3 virus (strain Wash/47885/57) (HPIV-3) protein is Protein C (P/V/C).